Consider the following 149-residue polypeptide: Nucleoside diphosphate kinase (149 aa).

The ATP site is built by Lys9, Phe57, Arg85, Thr91, Arg102, and Asn112. His115 serves as the catalytic Pros-phosphohistidine intermediate.

The protein belongs to the NDK family. Homotetramer. It depends on Mg(2+) as a cofactor.

The protein localises to the cytoplasm. It carries out the reaction a 2'-deoxyribonucleoside 5'-diphosphate + ATP = a 2'-deoxyribonucleoside 5'-triphosphate + ADP. It catalyses the reaction a ribonucleoside 5'-diphosphate + ATP = a ribonucleoside 5'-triphosphate + ADP. Major role in the synthesis of nucleoside triphosphates other than ATP. The ATP gamma phosphate is transferred to the NDP beta phosphate via a ping-pong mechanism, using a phosphorylated active-site intermediate. The polypeptide is Nucleoside diphosphate kinase (Nostoc sp. (strain PCC 7120 / SAG 25.82 / UTEX 2576)).